A 551-amino-acid polypeptide reads, in one-letter code: Adenine deaminase (551 aa).

It belongs to the metallo-dependent hydrolases superfamily. Adenine deaminase family. It depends on Mn(2+) as a cofactor.

The enzyme catalyses adenine + H2O + H(+) = hypoxanthine + NH4(+). The sequence is that of Adenine deaminase from Methanosarcina barkeri (strain Fusaro / DSM 804).